The sequence spans 98 residues: MSLTYMNMFMAFTISLLGLLMYRSHMMSSLLCLEGMMLSLFVMMTMTILNTHLTLASMIPIILLVFAACEAALGLSLLVMVSTTYGMDYVQNLNLLQC.

3 consecutive transmembrane segments (helical) span residues 1 to 21, 29 to 49, and 61 to 81; these read MSLT…GLLM, SLLC…MTIL, and IILL…LVMV.

It belongs to the complex I subunit 4L family. Core subunit of respiratory chain NADH dehydrogenase (Complex I) which is composed of 45 different subunits.

The protein localises to the mitochondrion inner membrane. It catalyses the reaction a ubiquinone + NADH + 5 H(+)(in) = a ubiquinol + NAD(+) + 4 H(+)(out). Functionally, core subunit of the mitochondrial membrane respiratory chain NADH dehydrogenase (Complex I) which catalyzes electron transfer from NADH through the respiratory chain, using ubiquinone as an electron acceptor. Part of the enzyme membrane arm which is embedded in the lipid bilayer and involved in proton translocation. The sequence is that of NADH-ubiquinone oxidoreductase chain 4L (MT-ND4L) from Chiroderma trinitatum (Little big-eyed bat).